A 541-amino-acid polypeptide reads, in one-letter code: Membrane protein insertase YidC (541 aa).

A helical membrane pass occupies residues 6–26 (SLLVLALIFISFLVYQQWQLD). The tract at residues 34-56 (EQTTSITATSDVPASSPSNSQAI) is disordered. 4 helical membrane passes run 337–357 (FWLL…IICV), 416–436 (LGGC…YWTF), 454–474 (LSAQ…MFLL), and 495–515 (PLVF…YWLV).

This sequence belongs to the OXA1/ALB3/YidC family. Type 1 subfamily. Interacts with the Sec translocase complex via SecD. Specifically interacts with transmembrane segments of nascent integral membrane proteins during membrane integration.

Its subcellular location is the cell inner membrane. Its function is as follows. Required for the insertion and/or proper folding and/or complex formation of integral membrane proteins into the membrane. Involved in integration of membrane proteins that insert both dependently and independently of the Sec translocase complex, as well as at least some lipoproteins. Aids folding of multispanning membrane proteins. This chain is Membrane protein insertase YidC, found in Haemophilus influenzae (strain ATCC 51907 / DSM 11121 / KW20 / Rd).